The sequence spans 313 residues: Biotin synthase (313 aa).

In terms of domain architecture, Radical SAM core spans 38–262 (REVQISTLLS…TMPHARVRLS (225 aa)). 3 residues coordinate [4Fe-4S] cluster: Cys53, Cys57, and Cys60. Cys97, Cys128, Cys188, and Arg260 together coordinate [2Fe-2S] cluster.

It belongs to the radical SAM superfamily. Biotin synthase family. Homodimer. [4Fe-4S] cluster serves as cofactor. The cofactor is [2Fe-2S] cluster.

The enzyme catalyses (4R,5S)-dethiobiotin + (sulfur carrier)-SH + 2 reduced [2Fe-2S]-[ferredoxin] + 2 S-adenosyl-L-methionine = (sulfur carrier)-H + biotin + 2 5'-deoxyadenosine + 2 L-methionine + 2 oxidized [2Fe-2S]-[ferredoxin]. It functions in the pathway cofactor biosynthesis; biotin biosynthesis; biotin from 7,8-diaminononanoate: step 2/2. Functionally, catalyzes the conversion of dethiobiotin (DTB) to biotin by the insertion of a sulfur atom into dethiobiotin via a radical-based mechanism. This is Biotin synthase from Granulibacter bethesdensis (strain ATCC BAA-1260 / CGDNIH1).